Consider the following 244-residue polypeptide: Mast cell protease 2 (244 aa).

Positions 1–18 are cleaved as a signal peptide; sequence MQALLFLMALLLPSGAGA. Residues 19–20 constitute a propeptide, activation peptide; that stretch reads EE. The Peptidase S1 domain maps to 21-242; that stretch reads IIGGVEAKPH…YLPWIYKVLK (222 aa). N44 carries N-linked (GlcNAc...) asparagine glycosylation. C50 and C66 are oxidised to a cystine. Catalysis depends on charge relay system residues H65 and D109. 2 disulfide bridges follow: C143-C208 and C174-C187. The active-site Charge relay system is the S202.

The protein belongs to the peptidase S1 family. Granzyme subfamily. As to expression, mucosal mast cells.

The sequence is that of Mast cell protease 2 (Mcpt2) from Mus musculus (Mouse).